Reading from the N-terminus, the 101-residue chain is Small ribosomal subunit protein bS18c (101 aa).

The protein belongs to the bacterial ribosomal protein bS18 family. In terms of assembly, part of the 30S ribosomal subunit.

The protein resides in the plastid. It is found in the chloroplast. This is Small ribosomal subunit protein bS18c from Morus indica (Mulberry).